The following is a 142-amino-acid chain: Probable signal recognition particle 19 kDa protein (142 aa).

Residues 115–142 (KTRQPGYTAPSVASSSAAAAGKKNKKKK) are disordered. Over residues 123–135 (APSVASSSAAAAG) the composition is skewed to low complexity.

It belongs to the SRP19 family. Component of a signal recognition particle complex that consists of a 7SL RNA molecule of 300 nucleotides and six protein subunits: srpa-72, srpa-68, SRP54, F37F2.2/SRP19, F25G6.8/SRP14 and ZK512.4/SRP9.

It localises to the cytoplasm. The protein localises to the nucleus. Its subcellular location is the nucleolus. Component of the signal recognition particle (SRP) complex, a ribonucleoprotein complex that mediates the cotranslational targeting of secretory and membrane proteins to the endoplasmic reticulum (ER). Binds directly to 7SL RNA. Mediates binding of SRP54 to the SRP complex. The sequence is that of Probable signal recognition particle 19 kDa protein from Caenorhabditis elegans.